The sequence spans 352 residues: Cell division protein ZipA (352 aa).

Residues 1–5 (MQELR) are Periplasmic-facing. A helical membrane pass occupies residues 6–26 (LVLIIVGALAISALLLHGLWT). Residues 27–352 (SRKEKPAKFG…REKAKLYSQA (326 aa)) lie on the Cytoplasmic side of the membrane. Positions 35 to 54 (FGEKPLGKLDDSNRDTEGFD) are enriched in basic and acidic residues. The segment at 35–56 (FGEKPLGKLDDSNRDTEGFDHT) is disordered.

It belongs to the ZipA family. Interacts with FtsZ via their C-terminal domains.

It localises to the cell inner membrane. Functionally, essential cell division protein that stabilizes the FtsZ protofilaments by cross-linking them and that serves as a cytoplasmic membrane anchor for the Z ring. Also required for the recruitment to the septal ring of downstream cell division proteins. In Photobacterium profundum (strain SS9), this protein is Cell division protein ZipA.